Reading from the N-terminus, the 271-residue chain is DNA-directed RNA polymerase subunit Rpo3 (271 aa).

The protein belongs to the archaeal Rpo3/eukaryotic RPB3 RNA polymerase subunit family. As to quaternary structure, part of the RNA polymerase complex.

Its subcellular location is the cytoplasm. It carries out the reaction RNA(n) + a ribonucleoside 5'-triphosphate = RNA(n+1) + diphosphate. Its function is as follows. DNA-dependent RNA polymerase (RNAP) catalyzes the transcription of DNA into RNA using the four ribonucleoside triphosphates as substrates. The sequence is that of DNA-directed RNA polymerase subunit Rpo3 from Picrophilus torridus (strain ATCC 700027 / DSM 9790 / JCM 10055 / NBRC 100828 / KAW 2/3).